A 240-amino-acid polypeptide reads, in one-letter code: UDP-2,3-diacylglucosamine hydrolase (240 aa).

5 residues coordinate Mn(2+): Asp-8, His-10, Asp-41, Asn-79, and His-114. A substrate-binding site is contributed by 79–80 (NR). 5 residues coordinate substrate: Asp-122, Ser-160, Asn-164, Lys-167, and His-195. 2 residues coordinate Mn(2+): His-195 and His-197.

The protein belongs to the LpxH family. Mn(2+) serves as cofactor.

The protein localises to the cell inner membrane. It carries out the reaction UDP-2-N,3-O-bis[(3R)-3-hydroxytetradecanoyl]-alpha-D-glucosamine + H2O = 2-N,3-O-bis[(3R)-3-hydroxytetradecanoyl]-alpha-D-glucosaminyl 1-phosphate + UMP + 2 H(+). It functions in the pathway glycolipid biosynthesis; lipid IV(A) biosynthesis; lipid IV(A) from (3R)-3-hydroxytetradecanoyl-[acyl-carrier-protein] and UDP-N-acetyl-alpha-D-glucosamine: step 4/6. Hydrolyzes the pyrophosphate bond of UDP-2,3-diacylglucosamine to yield 2,3-diacylglucosamine 1-phosphate (lipid X) and UMP by catalyzing the attack of water at the alpha-P atom. Involved in the biosynthesis of lipid A, a phosphorylated glycolipid that anchors the lipopolysaccharide to the outer membrane of the cell. This is UDP-2,3-diacylglucosamine hydrolase from Escherichia coli O17:K52:H18 (strain UMN026 / ExPEC).